The following is a 504-amino-acid chain: L-arabinose isomerase (504 aa).

Mn(2+)-binding residues include glutamate 308, glutamate 335, histidine 352, and histidine 452.

This sequence belongs to the arabinose isomerase family. Requires Mn(2+) as cofactor.

The enzyme catalyses beta-L-arabinopyranose = L-ribulose. It functions in the pathway carbohydrate degradation; L-arabinose degradation via L-ribulose; D-xylulose 5-phosphate from L-arabinose (bacterial route): step 1/3. In terms of biological role, catalyzes the conversion of L-arabinose to L-ribulose. The polypeptide is L-arabinose isomerase (Bifidobacterium adolescentis (strain ATCC 15703 / DSM 20083 / NCTC 11814 / E194a)).